The primary structure comprises 82 residues: Small ribosomal subunit protein bS16 (82 aa).

The protein belongs to the bacterial ribosomal protein bS16 family.

This Alcanivorax borkumensis (strain ATCC 700651 / DSM 11573 / NCIMB 13689 / SK2) protein is Small ribosomal subunit protein bS16.